Here is a 321-residue protein sequence, read N- to C-terminus: tRNA U34 carboxymethyltransferase (321 aa).

Residues lysine 90, tryptophan 104, lysine 109, glycine 129, 151–153 (DPT), 180–181 (IE), methionine 195, tyrosine 199, and arginine 314 contribute to the carboxy-S-adenosyl-L-methionine site.

Belongs to the class I-like SAM-binding methyltransferase superfamily. CmoB family. As to quaternary structure, homotetramer.

It carries out the reaction carboxy-S-adenosyl-L-methionine + 5-hydroxyuridine(34) in tRNA = 5-carboxymethoxyuridine(34) in tRNA + S-adenosyl-L-homocysteine + H(+). Catalyzes carboxymethyl transfer from carboxy-S-adenosyl-L-methionine (Cx-SAM) to 5-hydroxyuridine (ho5U) to form 5-carboxymethoxyuridine (cmo5U) at position 34 in tRNAs. This is tRNA U34 carboxymethyltransferase from Actinobacillus succinogenes (strain ATCC 55618 / DSM 22257 / CCUG 43843 / 130Z).